Reading from the N-terminus, the 230-residue chain is Large ribosomal subunit protein uL1 (230 aa).

The protein belongs to the universal ribosomal protein uL1 family. As to quaternary structure, part of the 50S ribosomal subunit.

Its function is as follows. Binds directly to 23S rRNA. The L1 stalk is quite mobile in the ribosome, and is involved in E site tRNA release. In terms of biological role, protein L1 is also a translational repressor protein, it controls the translation of the L11 operon by binding to its mRNA. The sequence is that of Large ribosomal subunit protein uL1 from Ligilactobacillus salivarius (strain UCC118) (Lactobacillus salivarius).